We begin with the raw amino-acid sequence, 1032 residues long: Phosphoenolpyruvate carboxylase 4 (1032 aa).

Histidine 154 is a catalytic residue. The disordered stretch occupies residues 377 to 407 (PNLQKQNEQDFSESDWEKIDNGSRSGLTSRG). A compositionally biased stretch (polar residues) spans 398–407 (GSRSGLTSRG). Lysine 699 is a catalytic residue.

The protein belongs to the PEPCase type 1 family. As to quaternary structure, homotetramer. Requires Mg(2+) as cofactor. Expressed at low levels in flowers and siliques, and detectable in roots.

It is found in the cytoplasm. The enzyme catalyses oxaloacetate + phosphate = phosphoenolpyruvate + hydrogencarbonate. Through the carboxylation of phosphoenolpyruvate (PEP) it forms oxaloacetate, a four-carbon dicarboxylic acid source for the tricarboxylic acid cycle. This chain is Phosphoenolpyruvate carboxylase 4 (PPC4), found in Arabidopsis thaliana (Mouse-ear cress).